Reading from the N-terminus, the 26-residue chain is Superoxide dismutase [Cu-Zn] (26 aa).

Cysteine 7 carries the S-palmitoyl cysteine lipid modification.

It belongs to the Cu-Zn superoxide dismutase family. As to quaternary structure, homotrimer. It depends on Cu cation as a cofactor. Requires Zn(2+) as cofactor.

It localises to the cytoplasm. Its subcellular location is the nucleus. It catalyses the reaction 2 superoxide + 2 H(+) = H2O2 + O2. Its function is as follows. Destroys radicals which are normally produced within the cells and which are toxic to biological systems. In Paralichthys olivaceus (Bastard halibut), this protein is Superoxide dismutase [Cu-Zn] (sod1).